Here is a 224-residue protein sequence, read N- to C-terminus: Processed variable antigen (224 aa).

17 tandem repeats follow at residues 1–6, 7–12, 13–18, 19–24, 25–30, 31–36, 37–42, 43–48, 49–54, 55–60, 61–66, 67–72, 73–78, 79–84, 85–90, 91–96, and 97–102. Residues 1-102 form a 17 X 6 AA tandem repeats of E-T-G-E-S-K region; the sequence is ETGESKETGE…GESKETGESK (102 aa). Positions 1–137 are enriched in basic and acidic residues; sequence ETGESKETGE…TEESKDREGN (137 aa). The tract at residues 1 to 224 is disordered; that stretch reads ETGESKETGE…KKADNKKKKK (224 aa). Residues 144 to 153 show a composition bias toward low complexity; it reads ENSENSNVTS. Composition is skewed to basic and acidic residues over residues 156–173 and 185–217; these read EETK…EKLG and EDPK…EKKA.

The polypeptide is Processed variable antigen (Plasmodium falciparum).